The chain runs to 273 residues: Large ribosomal subunit protein uL2cz/uL2cy (273 aa).

Disordered regions lie at residues 1–24 (MAIHLYKTSTPSTRKGAVDSQAKS) and 224–254 (NPVDHPHGGGEGRAPIGRKKPTTPWGYPALG).

The protein belongs to the universal ribosomal protein uL2 family. Part of the 50S ribosomal subunit.

It is found in the plastid. Its subcellular location is the chloroplast. This chain is Large ribosomal subunit protein uL2cz/uL2cy (rpl2-A), found in Nymphaea alba (White water-lily).